A 78-amino-acid polypeptide reads, in one-letter code: Defensin-like protein 141 (78 aa).

The signal sequence occupies residues 1-24; the sequence is MTKSIISAFFIILILGMMVNEIEG. Intrachain disulfides connect Cys31–Cys76, Cys40–Cys59, Cys45–Cys70, and Cys49–Cys72.

This sequence belongs to the DEFL family.

It is found in the secreted. The chain is Defensin-like protein 141 (LCR3) from Arabidopsis thaliana (Mouse-ear cress).